The chain runs to 334 residues: Protein U17/U16 (334 aa).

This sequence belongs to the herpesviridae US22 family.

In terms of biological role, isoform 3 can transactivate the human immunodeficiency virus type 1 promoter. In Human herpesvirus 6A (strain Uganda-1102) (HHV-6 variant A), this protein is Protein U17/U16 (U17/U16).